A 155-amino-acid polypeptide reads, in one-letter code: Protein Smg homolog (155 aa).

This sequence belongs to the Smg family.

This Azoarcus sp. (strain BH72) protein is Protein Smg homolog.